We begin with the raw amino-acid sequence, 290 residues long: Formamidopyrimidine-DNA glycosylase (290 aa).

P2 functions as the Schiff-base intermediate with DNA in the catalytic mechanism. Catalysis depends on E3, which acts as the Proton donor. K58 (proton donor; for beta-elimination activity) is an active-site residue. DNA is bound by residues H97, R122, and K165. The FPG-type; atypical zinc-finger motif lies at 250 to 290; it reads KVYGREGEPCPGCDCDPVRTGGIARIVQSGRSTFYCPRHQR. The Proton donor; for delta-elimination activity role is filled by R280.

This sequence belongs to the FPG family. As to quaternary structure, monomer. Requires Zn(2+) as cofactor.

It catalyses the reaction Hydrolysis of DNA containing ring-opened 7-methylguanine residues, releasing 2,6-diamino-4-hydroxy-5-(N-methyl)formamidopyrimidine.. The enzyme catalyses 2'-deoxyribonucleotide-(2'-deoxyribose 5'-phosphate)-2'-deoxyribonucleotide-DNA = a 3'-end 2'-deoxyribonucleotide-(2,3-dehydro-2,3-deoxyribose 5'-phosphate)-DNA + a 5'-end 5'-phospho-2'-deoxyribonucleoside-DNA + H(+). Functionally, involved in base excision repair of DNA damaged by oxidation or by mutagenic agents. Acts as a DNA glycosylase that recognizes and removes damaged bases. Has a preference for oxidized purines, such as 7,8-dihydro-8-oxoguanine (8-oxoG). Has AP (apurinic/apyrimidinic) lyase activity and introduces nicks in the DNA strand. Cleaves the DNA backbone by beta-delta elimination to generate a single-strand break at the site of the removed base with both 3'- and 5'-phosphates. This chain is Formamidopyrimidine-DNA glycosylase, found in Rhodospirillum centenum (strain ATCC 51521 / SW).